An 82-amino-acid polypeptide reads, in one-letter code: ATP synthase subunit c, chloroplastic (82 aa).

Helical transmembrane passes span 3-23 and 57-77; these read PIISAASVIAAGLAVGLAAIG and LAFMESLTIYGLVVALSLLFA.

This sequence belongs to the ATPase C chain family. In terms of assembly, F-type ATPases have 2 components, F(1) - the catalytic core - and F(0) - the membrane proton channel. F(1) has five subunits: alpha(3), beta(3), gamma(1), delta(1), epsilon(1). F(0) has four main subunits: a(1), b(1), b'(1) and c(10-14). The alpha and beta chains form an alternating ring which encloses part of the gamma chain. F(1) is attached to F(0) by a central stalk formed by the gamma and epsilon chains, while a peripheral stalk is formed by the delta, b and b' chains.

The protein resides in the plastid. The protein localises to the chloroplast thylakoid membrane. In terms of biological role, f(1)F(0) ATP synthase produces ATP from ADP in the presence of a proton or sodium gradient. F-type ATPases consist of two structural domains, F(1) containing the extramembraneous catalytic core and F(0) containing the membrane proton channel, linked together by a central stalk and a peripheral stalk. During catalysis, ATP synthesis in the catalytic domain of F(1) is coupled via a rotary mechanism of the central stalk subunits to proton translocation. Functionally, key component of the F(0) channel; it plays a direct role in translocation across the membrane. A homomeric c-ring of between 10-14 subunits forms the central stalk rotor element with the F(1) delta and epsilon subunits. The chain is ATP synthase subunit c, chloroplastic from Cyanidium caldarium (Red alga).